The primary structure comprises 268 residues: Small ribosomal subunit protein uS3 (268 aa).

The 69-residue stretch at 39-107 (VREYLKKKLK…PVHVNIEEIR (69 aa)) folds into the KH type-2 domain. A disordered region spans residues 216–268 (VEEVAEEKRPRRNARPGGDRRPRRDGEGGGPAGARRGAPRRAGGAGGDGKTGE). Positions 232–242 (GGDRRPRRDGE) are enriched in basic and acidic residues. Residues 248–257 (GARRGAPRRA) show a composition bias toward low complexity. Over residues 258-268 (GGAGGDGKTGE) the composition is skewed to gly residues.

This sequence belongs to the universal ribosomal protein uS3 family. As to quaternary structure, part of the 30S ribosomal subunit. Forms a tight complex with proteins S10 and S14.

Binds the lower part of the 30S subunit head. Binds mRNA in the 70S ribosome, positioning it for translation. This Paraburkholderia phytofirmans (strain DSM 17436 / LMG 22146 / PsJN) (Burkholderia phytofirmans) protein is Small ribosomal subunit protein uS3.